The primary structure comprises 122 residues: Large ribosomal subunit protein bL12 (122 aa).

This sequence belongs to the bacterial ribosomal protein bL12 family. As to quaternary structure, homodimer. Part of the ribosomal stalk of the 50S ribosomal subunit. Forms a multimeric L10(L12)X complex, where L10 forms an elongated spine to which 2 to 4 L12 dimers bind in a sequential fashion. Binds GTP-bound translation factors.

In terms of biological role, forms part of the ribosomal stalk which helps the ribosome interact with GTP-bound translation factors. Is thus essential for accurate translation. This is Large ribosomal subunit protein bL12 from Pseudomonas entomophila (strain L48).